The chain runs to 1052 residues: Suppressor of RPS4-RLD 1 (1052 aa).

An N-acetylalanine modification is found at A2. TPR repeat units follow at residues 39 to 72 (ILDI…EPFA) and 74 to 106 (QAFI…ALQQ). A coiled-coil region spans residues 107–136 (TADVKQLLELEELLKDARREIDGILKSHAT). Positions 131 to 181 (LKSHATESPQETPAYHSEKSDEKSDKLDNHESGASSNGNSHESSSELGEQS) are disordered. Positions 146 to 161 (HSEKSDEKSDKLDNHE) are enriched in basic and acidic residues. Residues 162–181 (SGASSNGNSHESSSELGEQS) are compositionally biased toward low complexity. 9 TPR repeats span residues 297 to 330 (VDFR…EPTY), 331 to 364 (PEAL…NPAA), 365 to 398 (SEAW…EPNS), 400 to 432 (DVLH…EKDN), 433 to 466 (KSAY…DSNY), 468 to 500 (EAWL…DNRV), 502 to 534 (KAYH…ENTI), 535 to 567 (ECLY…ELDA), and 569 to 591 (EKFV…ASKV). A disordered region spans residues 704–739 (STKGTTKNGKKNRRRERTNILSQNRGGAGCSSSSFS). The helical transmembrane segment at 966–986 (GTAVTGFVVLLGLLLAANMEF) threads the bilayer.

Multimer. Interacts with EDS1. Interacts with SNC1 and RPS4. Interacts (via TPR domain) with SGT1 (via TPR domain). Interacts with the TCP transcription factors TCP8, TCP14, TCP15, TCP20, TCP22 and TCP23. Ubiquitous. Not detected in very young flowers and older siliques.

Its subcellular location is the nucleus. It is found in the cytoplasm. The protein resides in the perinuclear region. It localises to the membrane. The protein localises to the microsome. In terms of biological role, negative regulator of effector-triggered immunity associated with the EDS1 resistance pathway. May localize its interactors to a microsomal membrane. May therefore negatively regulate RPS4 and SNC1 translocation to the nucleus. Contributes to the regulation of RPS2 and RPS4 protein levels and negatively regulates SNC1 stability. The polypeptide is Suppressor of RPS4-RLD 1 (Arabidopsis thaliana (Mouse-ear cress)).